The sequence spans 181 residues: Probable pyruvoyl-dependent arginine decarboxylase (181 aa).

Residue Ser-43 is modified to Pyruvic acid (Ser).

Belongs to the PdaD family. Requires pyruvate as cofactor.

It carries out the reaction L-arginine + H(+) = agmatine + CO2. This Chlorobaculum tepidum (strain ATCC 49652 / DSM 12025 / NBRC 103806 / TLS) (Chlorobium tepidum) protein is Probable pyruvoyl-dependent arginine decarboxylase.